Consider the following 315-residue polypeptide: ADP-L-glycero-D-manno-heptose-6-epimerase (315 aa).

NADP(+) contacts are provided by residues 10 to 11, 31 to 32, K38, K53, 76 to 80, and N93; these read FI, DD, and QGACS. The Proton acceptor role is filled by Y140. K144 contributes to the NADP(+) binding site. N169 provides a ligand contact to substrate. NADP(+) contacts are provided by V170 and K178. K178 acts as the Proton acceptor in catalysis. Substrate contacts are provided by residues S180, H187, 201–204, R214, and Y278; that span reads FEGC.

This sequence belongs to the NAD(P)-dependent epimerase/dehydratase family. HldD subfamily. Homopentamer. NADP(+) serves as cofactor.

The enzyme catalyses ADP-D-glycero-beta-D-manno-heptose = ADP-L-glycero-beta-D-manno-heptose. It participates in nucleotide-sugar biosynthesis; ADP-L-glycero-beta-D-manno-heptose biosynthesis; ADP-L-glycero-beta-D-manno-heptose from D-glycero-beta-D-manno-heptose 7-phosphate: step 4/4. Catalyzes the interconversion between ADP-D-glycero-beta-D-manno-heptose and ADP-L-glycero-beta-D-manno-heptose via an epimerization at carbon 6 of the heptose. This chain is ADP-L-glycero-D-manno-heptose-6-epimerase, found in Syntrophotalea carbinolica (strain DSM 2380 / NBRC 103641 / GraBd1) (Pelobacter carbinolicus).